Here is a 361-residue protein sequence, read N- to C-terminus: MGNIHIQTKSKEYDVYVGKESLSHLTTIVQNMQPSVSNIMIISDEAVASLHLQTVVDALQIDQKVFSFVVPSGEKEKSFENFYAAHTSALENKLDRNSLIVALGGGMIGDLAGFVAASFMRGIRFVQVPTTLLAHDSAVGGKVAINHPLGKNMIGAFHQPEAVVYHTPFLQSLPEKEWRSGYAEVIKHALIGDVKLYHWLKEEVQTLADLRDEKLIHILTKAIPVKANIVAQDETEKGVRAHLNFGHTLGHALEKELGYGNITHGDGVAVGMLFAIFLSEQVYKVNLAYEEMKQWFLKYGYPKMPSDLSVERLVGLMKQDKKANAGTIHMVLMQEYGVVNVVSISDETVHIALEAFQKDMV.

Residues 72 to 77, 130 to 131, K142, and K151 contribute to the NAD(+) site; these read SGEKEK and TT. Positions 184, 247, and 264 each coordinate Zn(2+).

Belongs to the sugar phosphate cyclases superfamily. Dehydroquinate synthase family. Requires Co(2+) as cofactor. Zn(2+) is required as a cofactor. It depends on NAD(+) as a cofactor.

The protein resides in the cytoplasm. It catalyses the reaction 7-phospho-2-dehydro-3-deoxy-D-arabino-heptonate = 3-dehydroquinate + phosphate. It functions in the pathway metabolic intermediate biosynthesis; chorismate biosynthesis; chorismate from D-erythrose 4-phosphate and phosphoenolpyruvate: step 2/7. Catalyzes the conversion of 3-deoxy-D-arabino-heptulosonate 7-phosphate (DAHP) to dehydroquinate (DHQ). The sequence is that of 3-dehydroquinate synthase from Bacillus cereus (strain AH820).